We begin with the raw amino-acid sequence, 245 residues long: 14-3-3 protein zeta/delta (245 aa).

Methionine 1 bears the N-acetylmethionine mark. Lysine 3 carries the N6-acetyllysine modification. Serine 58 bears the Phosphoserine; by PKA mark. The residue at position 68 (lysine 68) is an N6-acetyllysine. A phosphoserine mark is found at serine 184, serine 207, and serine 210. Residue threonine 232 is modified to Phosphothreonine; by CK1.

Belongs to the 14-3-3 family. Homodimer. Heterodimerizes with YWHAE. Homo- and heterodimerization is inhibited by phosphorylation on Ser-58. Interacts with FOXO4, NOXA1, SSH1 ARHGEF2, CDK16 and BSPRY. Interacts with WEE1 (C-terminal). Interacts with MLF1 (phosphorylated form); the interaction retains it in the cytoplasm. Interacts with BAX; the interaction occurs in the cytoplasm. Under stress conditions, MAPK8-mediated phosphorylation releases BAX to mitochondria. Interacts with TP53; the interaction enhances p53 transcriptional activity. The Ser-58 phosphorylated form inhibits this interaction and p53 transcriptional activity. Interacts with ABL1 (phosphorylated form); the interaction retains ABL1 in the cytoplasm. Interacts with PKA-phosphorylated AANAT; the interaction modulates AANAT enzymatic activity by increasing affinity for arylalkylamines and acetyl-CoA and protecting the enzyme from dephosphorylation and proteasomal degradation. It may also prevent thiol-dependent inactivation. Interacts with AKT1; the interaction phosphorylates YWHAZ and modulates dimerization. Interacts with GAB2. Interacts with BCL2L11, SAMSN1 and TLK2. Interacts with phosphorylated RAF1; the interaction is inhibited when YWHAZ is phosphorylated on Thr-232. Interacts with Thr-phosphorylated ITGB2. Interacts with the 'Thr-369' phosphorylated form of DAPK2. Interacts with PI4KB, TBC1D22A and TBC1D22B. Interacts with ZFP36L1 (via phosphorylated form); this interaction occurs in a p38 MAPK- and AKT-signaling pathways. Interacts with SLITRK1. Interacts with AK5, LDB1, MADD, MARK3, PDE1A and SMARCB1. Interacts with YWHAZ. Interacts with MEFV. Interacts with ADAM22 (via C-terminus). In terms of processing, the delta, brain-specific form differs from the zeta form in being phosphorylated. Phosphorylation on Ser-184 by MAPK8; promotes dissociation of BAX and translocation of BAX to mitochondria. Phosphorylation on Thr-232; inhibits binding of RAF1. Phosphorylated on Ser-58 by PKA and protein kinase C delta type catalytic subunit in a sphingosine-dependent fashion. Phosphorylation on Ser-58 by PKA; disrupts homodimerization and heterodimerization with YHAE and TP53.

It localises to the cytoplasm. It is found in the melanosome. In terms of biological role, adapter protein implicated in the regulation of a large spectrum of both general and specialized signaling pathways. Binds to a large number of partners, usually by recognition of a phosphoserine or phosphothreonine motif. Binding generally results in the modulation of the activity of the binding partner. Promotes cytosolic retention and inactivation of TFEB transcription factor by binding to phosphorylated TFEB. Induces ARHGEF7 activity on RAC1 as well as lamellipodia and membrane ruffle formation. In neurons, regulates spine maturation through the modulation of ARHGEF7 activity. The polypeptide is 14-3-3 protein zeta/delta (YWHAZ) (Bos taurus (Bovine)).